A 258-amino-acid polypeptide reads, in one-letter code: Synapse differentiation-inducing gene protein 1 (258 aa).

Topologically, residues Met-1–His-181 are cytoplasmic. Position 137 is a phosphoserine (Ser-137). Residues Leu-182–Tyr-202 form a helical membrane-spanning segment. Over Leu-203–Phe-228 the chain is Extracellular. Residues Leu-229 to Ile-249 constitute an intramembrane region (helical). Topologically, residues Ala-250–Leu-258 are extracellular.

It belongs to the CD225/Dispanin family. In terms of assembly, homodimer. Interacts with GRIA1 and GRIA2. In terms of tissue distribution, enriched in the cerebellum and also expressed in the neocortex and modestly in the hippocampus (at protein level). Expressed in hippocampal neurons, both in cell body and neurites, however its presence is enriched at excitatory synapses and also found in postsynaptic cells.

It localises to the cell membrane. It is found in the early endosome membrane. The protein localises to the postsynaptic density membrane. The protein resides in the synapse. Its subcellular location is the cell projection. It localises to the dendrite. It is found in the dendritic spine. Its function is as follows. May regulate AMPA receptor content at nascent synapses, and have a role in postsynaptic development and maturation. This is Synapse differentiation-inducing gene protein 1 (Syndig1) from Rattus norvegicus (Rat).